The primary structure comprises 184 residues: ATP-dependent protease subunit HslV (184 aa).

T12 is a catalytic residue. Na(+)-binding residues include A166, C169, and T172.

The protein belongs to the peptidase T1B family. HslV subfamily. A double ring-shaped homohexamer of HslV is capped on each side by a ring-shaped HslU homohexamer. The assembly of the HslU/HslV complex is dependent on binding of ATP.

It is found in the cytoplasm. It catalyses the reaction ATP-dependent cleavage of peptide bonds with broad specificity.. Its activity is regulated as follows. Allosterically activated by HslU binding. Its function is as follows. Protease subunit of a proteasome-like degradation complex believed to be a general protein degrading machinery. The chain is ATP-dependent protease subunit HslV from Brucella ovis (strain ATCC 25840 / 63/290 / NCTC 10512).